The sequence spans 162 residues: Peroxiredoxin-2D (162 aa).

One can recognise a Thioredoxin domain in the interval 4-162 (ITVGDVVPDG…SSAEDILKAL (159 aa)). Cys51 acts as the Cysteine sulfenic acid (-SOH) intermediate in catalysis.

This sequence belongs to the peroxiredoxin family. Prx5 subfamily. Monomer. Exclusively expressed in buds and flowers. Also detected in pollen.

The protein localises to the cytoplasm. It carries out the reaction [glutaredoxin]-dithiol + a hydroperoxide = [glutaredoxin]-disulfide + an alcohol + H2O. Its function is as follows. Thiol-specific peroxidase that catalyzes the reduction of hydrogen peroxide and organic hydroperoxides to water and alcohols, respectively. Plays a role in cell protection against oxidative stress by detoxifying peroxides. May be involved in intracellular redox signaling. The polypeptide is Peroxiredoxin-2D (PRXIID) (Arabidopsis thaliana (Mouse-ear cress)).